The sequence spans 305 residues: Glycerol-3-phosphate dehydrogenase [NAD(P)+] (305 aa).

NADPH contacts are provided by Phe10, Arg29, and Lys87. Positions 87, 115, and 117 each coordinate sn-glycerol 3-phosphate. Ala119 provides a ligand contact to NADPH. The sn-glycerol 3-phosphate site is built by Lys170, Asp223, Ser233, Arg234, and Asn235. Lys170 functions as the Proton acceptor in the catalytic mechanism. Arg234 lines the NADPH pocket. Glu255 is a binding site for NADPH.

Belongs to the NAD-dependent glycerol-3-phosphate dehydrogenase family.

Its subcellular location is the cytoplasm. The enzyme catalyses sn-glycerol 3-phosphate + NAD(+) = dihydroxyacetone phosphate + NADH + H(+). It catalyses the reaction sn-glycerol 3-phosphate + NADP(+) = dihydroxyacetone phosphate + NADPH + H(+). Its pathway is membrane lipid metabolism; glycerophospholipid metabolism. Functionally, catalyzes the reduction of the glycolytic intermediate dihydroxyacetone phosphate (DHAP) to sn-glycerol 3-phosphate (G3P), the key precursor for phospholipid synthesis. This chain is Glycerol-3-phosphate dehydrogenase [NAD(P)+], found in Cereibacter sphaeroides (strain ATCC 17023 / DSM 158 / JCM 6121 / CCUG 31486 / LMG 2827 / NBRC 12203 / NCIMB 8253 / ATH 2.4.1.) (Rhodobacter sphaeroides).